The following is a 546-amino-acid chain: Fusion glycoprotein F0 (546 aa).

An N-terminal signal peptide occupies residues 1-26 (MVVILDKRCYCNLLILILMISECSVG). Topologically, residues 27 to 497 (ILHYEKLSKI…LISMLSMIIL (471 aa)) are extracellular. N-linked (GlcNAc...) asparagine; by host glycosylation is found at Asn-64, Asn-67, and Asn-99. Disulfide bonds link Cys-71–Cys-192, Cys-331–Cys-340, Cys-355–Cys-363, Cys-387–Cys-392, and Cys-394–Cys-417. The interval 110–134 (LAGVIMAGVAIGIATAAQITAGVAL) is fusion peptide. Residues 135 to 163 (YEAMKNADNINKLKSSIESTNEAVVKLQE) adopt a coiled-coil conformation. Residues Asn-414 and Asn-464 are each glycosylated (N-linked (GlcNAc...) asparagine; by host). Positions 459–484 (QISSMNQSLQQSKDYIKEAQRLLDTV) form a coiled coil. The helical transmembrane segment at 498-518 (YVLSIASLCIGLITFISFIIV) threads the bilayer. Over 519 to 546 (EKKRNTYSRLEDRRVRPTSSGDLYYIGT) the chain is Cytoplasmic.

It belongs to the paramyxoviruses fusion glycoprotein family. As to quaternary structure, homotrimer; disulfide-linked F1-F2. Interacts with the Glycoprotein G; this interaction involves both head and stalk regions of glygoprotein G. In pre-fusion state, found as a dimer of trimer. In terms of processing, the inactive precursor F0 is glycosylated and proteolytically cleaved into F1 and F2 to be functionally active. The cleavage is mediated by cellular proteases during the transport and maturation of the polypeptide.

Its subcellular location is the virion membrane. It localises to the host cell membrane. Functionally, class I viral fusion protein. Under the current model, the protein has at least 3 conformational states: pre-fusion native state, pre-hairpin intermediate state, and post-fusion hairpin state. During viral and plasma cell membrane fusion, the heptad repeat (HR) regions assume a trimer-of-hairpins structure, positioning the fusion peptide in close proximity to the C-terminal region of the ectodomain. The formation of this structure appears to drive apposition and subsequent fusion of viral and plasma cell membranes. Directs fusion of viral and cellular membranes leading to delivery of the nucleocapsid into the cytoplasm. This fusion is pH independent and occurs directly at the outer cell membrane. The trimer of F1-F2 (F protein) probably interacts with G at the virion surface. Upon G binding to its cellular receptor, the hydrophobic fusion peptide is unmasked and interacts with the cellular membrane, inducing the fusion between cell and virion membranes. Later in infection, F proteins expressed at the plasma membrane of infected cells could mediate fusion with adjacent cells to form syncytia, a cytopathic effect that could lead to tissue necrosis. The sequence is that of Fusion glycoprotein F0 (F) from Cynopterus brachyotis (Lesser short-nosed fruit bat).